The primary structure comprises 447 residues: Asparagine--tRNA ligase (447 aa).

It belongs to the class-II aminoacyl-tRNA synthetase family. Homodimer.

The protein resides in the cytoplasm. It catalyses the reaction tRNA(Asn) + L-asparagine + ATP = L-asparaginyl-tRNA(Asn) + AMP + diphosphate + H(+). The protein is Asparagine--tRNA ligase of Lactococcus lactis subsp. lactis (strain IL1403) (Streptococcus lactis).